Consider the following 451-residue polypeptide: Serine--tRNA ligase (451 aa).

258–260 (TSE) serves as a coordination point for L-serine. Residue 289 to 291 (RSE) coordinates ATP. Glutamate 312 provides a ligand contact to L-serine. 376-379 (EISS) is a binding site for ATP. Residue serine 411 coordinates L-serine.

Belongs to the class-II aminoacyl-tRNA synthetase family. Type-1 seryl-tRNA synthetase subfamily. Homodimer. The tRNA molecule binds across the dimer.

The protein localises to the cytoplasm. It catalyses the reaction tRNA(Ser) + L-serine + ATP = L-seryl-tRNA(Ser) + AMP + diphosphate + H(+). The enzyme catalyses tRNA(Sec) + L-serine + ATP = L-seryl-tRNA(Sec) + AMP + diphosphate + H(+). It functions in the pathway aminoacyl-tRNA biosynthesis; selenocysteinyl-tRNA(Sec) biosynthesis; L-seryl-tRNA(Sec) from L-serine and tRNA(Sec): step 1/1. Its function is as follows. Catalyzes the attachment of serine to tRNA(Ser). Is also able to aminoacylate tRNA(Sec) with serine, to form the misacylated tRNA L-seryl-tRNA(Sec), which will be further converted into selenocysteinyl-tRNA(Sec). The sequence is that of Serine--tRNA ligase from Bordetella pertussis (strain Tohama I / ATCC BAA-589 / NCTC 13251).